Here is a 288-residue protein sequence, read N- to C-terminus: MGQKVHPHGFRLGISTDWKSRWFADKLYKDYVGEDVKIRRMMSKGLERAGISKVDIERTRDRVRVDIHTARPGIVIGRKGAEADRIRGKLEKLTGKQVQLNIIEVKSPESDAQLVAQGVAEQLSSRVSFRRAMRKAMQSAMKNPVCKGIRVQVSGRLGGAEMSRTEFYREGRVPLHTLRANIEYGFFEARTTFGRIGVKVWIYKGDAVPGRETPAEAPSRPRRERGDRSERPRRGRSGSSGTTAGGTEAGRAAATTIAQAAETPSGESVDAGAVASAATQPAETQQEG.

In terms of domain architecture, KH type-2 spans 38 to 106 (IRRMMSKGLE…QVQLNIIEVK (69 aa)). A disordered region spans residues 209–288 (PGRETPAEAP…TQPAETQQEG (80 aa)). Basic and acidic residues predominate over residues 219-232 (SRPRRERGDRSERP). Over residues 249 to 264 (AGRAAATTIAQAAETP) the composition is skewed to low complexity. A compositionally biased stretch (polar residues) spans 277–288 (AATQPAETQQEG).

Belongs to the universal ribosomal protein uS3 family. In terms of assembly, part of the 30S ribosomal subunit. Forms a tight complex with proteins S10 and S14.

Binds the lower part of the 30S subunit head. Binds mRNA in the 70S ribosome, positioning it for translation. This is Small ribosomal subunit protein uS3 from Salinispora tropica (strain ATCC BAA-916 / DSM 44818 / JCM 13857 / NBRC 105044 / CNB-440).